Reading from the N-terminus, the 479-residue chain is Poly(A) polymerase catalytic subunit (479 aa).

Catalysis depends on residues aspartate 202 and aspartate 204. Ca(2+) is bound by residues aspartate 202, aspartate 204, and aspartate 253.

This sequence belongs to the poxviridae poly(A) polymerase catalytic subunit family. As to quaternary structure, heterodimer of a large (catalytic) subunit and a small (regulatory) subunit.

The enzyme catalyses RNA(n) + ATP = RNA(n)-3'-adenine ribonucleotide + diphosphate. Its function is as follows. Polymerase that creates the 3'-poly(A) tail of mRNA's. This chain is Poly(A) polymerase catalytic subunit (OPG063), found in Homo sapiens (Human).